A 171-amino-acid polypeptide reads, in one-letter code: Large ribosomal subunit protein bL21 (171 aa).

The interval 144 to 171 (AAPAKAEAAPKKKAAPKKAAAKTEEGEA) is disordered. Residues 154–163 (KKKAAPKKAA) are compositionally biased toward basic residues.

Belongs to the bacterial ribosomal protein bL21 family. Part of the 50S ribosomal subunit. Contacts protein L20.

This protein binds to 23S rRNA in the presence of protein L20. The chain is Large ribosomal subunit protein bL21 from Caulobacter vibrioides (strain ATCC 19089 / CIP 103742 / CB 15) (Caulobacter crescentus).